Here is a 125-residue protein sequence, read N- to C-terminus: DNA-directed RNA polymerase II subunit RPB9 (125 aa).

Position 1 is an N-acetylmethionine (M1). The Zn(2+) site is built by C17, C20, C39, C42, C86, C89, C114, and C119. The C4-type zinc finger occupies 17-42; the sequence is CQECNNMLYPKEDKENRILLYACRNC. Residues 82-124 form a TFIIS-type zinc finger; that stretch reads EDHPCQKCGHKEAVFFQSHSARAEDAMRLYYVCTAPHCGHRWT.

The protein belongs to the archaeal RpoM/eukaryotic RPA12/RPB9/RPC11 RNA polymerase family. Component of the RNA polymerase II (Pol II) core complex consisting of 12 subunits: a ten-subunit catalytic core composed of POLR2A/RPB1, POLR2B/RPB2, POLR2C/RPB3, POLR2I/RPB9, POLR2J/RPB11, POLR2E/RPABC1, POLR2F/RPABC2, POLR2H/RPABC3, POLR2K/RPABC4 and POLR2L/RPABC5 and a mobile stalk composed of two subunits POLR2D/RPB4 and POLR2G/RPB7, protruding from the core and functioning primarily in transcription initiation. Part of Pol II(G) complex, in which Pol II core associates with an additional subunit POLR2M; unlike conventional Pol II, Pol II(G) functions as a transcriptional repressor. Part of TBP-based Pol II pre-initiation complex (PIC), in which Pol II core assembles with general transcription factors and other specific initiation factors including GTF2E1, GTF2E2, GTF2F1, GTF2F2, TCEA1, ERCC2, ERCC3, GTF2H2, GTF2H3, GTF2H4, GTF2H5, GTF2A1, GTF2A2, GTF2B and TBP; this large multi-subunit PIC complex mediates DNA unwinding and targets Pol II core to the transcription start site where the first phosphodiester bond forms.

It localises to the nucleus. The protein resides in the nucleolus. Its function is as follows. DNA-dependent RNA polymerase catalyzes the transcription of DNA into RNA using the four ribonucleoside triphosphates as substrates. Component of RNA polymerase II which synthesizes mRNA precursors and many functional non-coding RNAs. Pol II is the central component of the basal RNA polymerase II transcription machinery. It is composed of mobile elements that move relative to each other. POLR2I/RPB9 is part of the upper jaw surrounding the central large cleft and thought to grab the incoming DNA template. This is DNA-directed RNA polymerase II subunit RPB9 (POLR2I) from Bos taurus (Bovine).